Reading from the N-terminus, the 91-residue chain is Elongation factor 1-beta (91 aa).

It belongs to the EF-1-beta/EF-1-delta family.

Promotes the exchange of GDP for GTP in EF-1-alpha/GDP, thus allowing the regeneration of EF-1-alpha/GTP that could then be used to form the ternary complex EF-1-alpha/GTP/AAtRNA. The chain is Elongation factor 1-beta (ef1b) from Pyrococcus horikoshii (strain ATCC 700860 / DSM 12428 / JCM 9974 / NBRC 100139 / OT-3).